The primary structure comprises 568 residues: Tyrosine-protein kinase transforming protein Src (568 aa).

Residues 1–58 (MGSSKSKPKDPSQRRRSLEPPDSTHHGGFPASQTPNKTAAPDTHRTPSRSFGTVATEP) form a disordered region. The N-myristoyl glycine; by host moiety is linked to residue Gly2. Basic and acidic residues predominate over residues 7–25 (KPKDPSQRRRSLEPPDSTH). An SH3 domain is found at 81–142 (GGVTTFVALY…PSNYVAPSDS (62 aa)). The region spanning 148–245 (WYFGKITRRE…GLCHRLTNVC (98 aa)) is the SH2 domain. The region spanning 267–520 (LRLEVKLGQG…YLQAFLEDYF (254 aa)) is the Protein kinase domain. ATP-binding positions include 273–281 (LGQGCFGEV) and Lys295. The active-site Proton acceptor is Asp386. A Phosphotyrosine; by autocatalysis modification is found at Tyr416.

Belongs to the protein kinase superfamily. Tyr protein kinase family. SRC subfamily. The phosphorylated form is termed pp60v-src.

The catalysed reaction is L-tyrosyl-[protein] + ATP = O-phospho-L-tyrosyl-[protein] + ADP + H(+). In terms of biological role, this phosphoprotein, required for both the initiation and the maintenance of neoplastic transformation, is a protein kinase that catalyzes the phosphorylation of tyrosine residues in vitro. The protein is Tyrosine-protein kinase transforming protein Src (V-SRC) of Galliformes.